We begin with the raw amino-acid sequence, 230 residues long: Eukaryotic translation initiation factor 4E-1 (230 aa).

Residues 1-53 (MVVEDSQKSTITDEQNPSRVDNDDDDLEDGEILEDADDAASAASKPPSAFLRN) form a disordered region. The segment covering 8–19 (KSTITDEQNPSR) has biased composition (polar residues). The segment covering 22 to 38 (NDDDDLEDGEILEDADD) has biased composition (acidic residues). The span at 39-49 (AASAASKPPSA) shows a compositional bias: low complexity. EIF4G-binding regions lie at residues 55 to 58 (HPLE) and 65 to 101 (FDNPSAKSKQAAWGSSIRPIYTFSTVEEFWSIYNNIH). Residues 73 to 78 (KQAAWG), Lys105, and 123 to 124 (WE) contribute to the mRNA site. A disulfide bridge connects residues Cys128 and Cys166. Residues 149–158 (YTLLAMIGEQ) form an EIF4G-binding region. Residues 173–178 (RNRQDK) and 218–222 (KKHER) contribute to the mRNA site.

It belongs to the eukaryotic initiation factor 4E family. EIF4F is a multi-subunit complex, the composition of which varies with external and internal environmental conditions. It is composed of at least EIF4A, EIF4E and EIF4G. EIF4E is also known to interact with other partners. In higher plants two isoforms of EIF4F have been identified, named isoform EIF4F and isoform EIF(iso)4F. Isoform EIF4F has subunits p220 and p26, whereas isoform EIF(iso)4F has subunits p82 and p28. In terms of assembly, (Microbial infection) Interacts with potyvirus viral genome-linked protein (VPg); this interaction is possible in susceptible hosts but impaired in resistant plants. According to the redox status, the Cys-128-Cys-166 disulfide bridge may have a role in regulating protein function by affecting its ability to bind capped mRNA.

Its subcellular location is the nucleus. It is found in the cytoplasm. In terms of biological role, component of the protein complex eIF4F, which is involved in the recognition of the mRNA cap, ATP-dependent unwinding of 5'-terminal secondary structure and recruitment of mRNA to the ribosome. Recognizes and binds the 7-methylguanosine-containing mRNA cap during an early step in the initiation of protein synthesis and facilitates ribosome binding by inducing the unwinding of the mRNAs secondary structures. Key component of recessive resistance to potyviruses. Functionally, (Microbial infection) Susceptibility host factor required for viral infection by recruiting viral RNAs to the host ribosomal complex via an interaction with viral genome-linked protein (VPg). The protein is Eukaryotic translation initiation factor 4E-1 of Phaseolus vulgaris (Kidney bean).